The primary structure comprises 673 residues: UvrABC system protein B (673 aa).

One can recognise a Helicase ATP-binding domain in the interval 26–183 (EGLEDGLAHQ…RRLAELQYTR (158 aa)). 39–46 (GVTGSGKT) lines the ATP pocket. The short motif at 92–115 (YYDYYQPEAYVPSSDTFIEKDASV) is the Beta-hairpin element. The Helicase C-terminal domain maps to 431–597 (QVDDLLSEIR…GLNKKVVDIL (167 aa)). Positions 633 to 668 (QQKIHELEGQMMQHAQNLEFEEAAEIRDQLHQLREL) constitute a UVR domain.

Belongs to the UvrB family. In terms of assembly, forms a heterotetramer with UvrA during the search for lesions. Interacts with UvrC in an incision complex.

The protein localises to the cytoplasm. In terms of biological role, the UvrABC repair system catalyzes the recognition and processing of DNA lesions. A damage recognition complex composed of 2 UvrA and 2 UvrB subunits scans DNA for abnormalities. Upon binding of the UvrA(2)B(2) complex to a putative damaged site, the DNA wraps around one UvrB monomer. DNA wrap is dependent on ATP binding by UvrB and probably causes local melting of the DNA helix, facilitating insertion of UvrB beta-hairpin between the DNA strands. Then UvrB probes one DNA strand for the presence of a lesion. If a lesion is found the UvrA subunits dissociate and the UvrB-DNA preincision complex is formed. This complex is subsequently bound by UvrC and the second UvrB is released. If no lesion is found, the DNA wraps around the other UvrB subunit that will check the other stand for damage. This chain is UvrABC system protein B, found in Citrobacter koseri (strain ATCC BAA-895 / CDC 4225-83 / SGSC4696).